A 367-amino-acid polypeptide reads, in one-letter code: MAIDFPSEISALRTTYASIREVSDLDALRKELADLNDEAAAPSLWDDPEHAQTVTSRLSAVQAELDRIEKMGGRIDDLEVLVELSEDEHDADSLAEAETELNEVKEQLAQLEVRTLLSGEYDSREAIVTIRSEAGGVDAADFAEMLMRMYLRWAERRGYKSEVYDTSYAEEAGIKSATFKVAAPYAYGTLSVEQGTHRLVRISPFDNQGRRQTSFAGVEVLPVVAETDHVDVPENEVRVDVYRSSGPGGQSVNTTDSAVRLTHLPTGIVVTCQNEKSQLQNKAAAMRVLQAKLLEKARKDRQAELDALKGDDSGSWGNQMRSYVLHPYQMVKDLRTNYEVGNTSSIFDGEIDSFLEAGIRWRKQGES.

An N5-methylglutamine modification is found at Gln250.

It belongs to the prokaryotic/mitochondrial release factor family. Post-translationally, methylated by PrmC. Methylation increases the termination efficiency of RF2.

The protein localises to the cytoplasm. Peptide chain release factor 2 directs the termination of translation in response to the peptide chain termination codons UGA and UAA. This Kineococcus radiotolerans (strain ATCC BAA-149 / DSM 14245 / SRS30216) protein is Peptide chain release factor 2.